The primary structure comprises 385 residues: Mannitol-1-phosphate 5-dehydrogenase (385 aa).

3-14 contacts NAD(+); it reads AVHFGAGNIGRG.

Belongs to the mannitol dehydrogenase family.

The catalysed reaction is D-mannitol 1-phosphate + NAD(+) = beta-D-fructose 6-phosphate + NADH + H(+). This is Mannitol-1-phosphate 5-dehydrogenase from Geobacillus thermodenitrificans (strain NG80-2).